A 389-amino-acid polypeptide reads, in one-letter code: Aspartic protease pepA (389 aa).

Residues 1 to 20 form the signal peptide; the sequence is MVLINQLGAVLAVCATLTVA. The propeptide at 21–67 is activation peptide; the sequence is APTKGKARFNVPQVAIPKKMVHHPAVSYARALHKFGMKVPKTVQDAA. Residues 82–386 form the Peptidase A1 domain; it reads YVTQVTVGEG…DTQGPRIGFA (305 aa). Aspartate 98 is a catalytic residue. Asparagine 257 carries an N-linked (GlcNAc...) asparagine glycan. Aspartate 279 is an active-site residue. Cysteines 315 and 348 form a disulfide.

The protein belongs to the peptidase A1 family. As to quaternary structure, monomer.

It localises to the secreted. Its function is as follows. Secreted aspartic endopeptidase that allows assimilation of proteinaceous substrates. The scissile peptide bond is attacked by a nucleophilic water molecule activated by two aspartic residues in the active site. Shows a broad primary substrate specificity. Favors hydrophobic residues at the P1 and P1' positions. This is Aspartic protease pepA from Arthroderma otae (strain ATCC MYA-4605 / CBS 113480) (Microsporum canis).